A 206-amino-acid polypeptide reads, in one-letter code: MRLSLRHITWLKIAIWLAATLPLLWLVLSINLGGLSADPAKDIQHFTGRMALKLLLATLLVSPLARYSKQPLLLRCRRLLGLWCFAWGTLHLLSYSILELGLSNIGLLGHELINRPYLTLGIISWLVLLALALTSTRWAQRKMGARWQKLHNWVYVVAILAPIHYLWSVKTLSPWPIIYAVMAALLLLLRYKLLLPRYKKFRQWFR.

The next 5 membrane-spanning stretches (helical) occupy residues 13–33 (IAIW…INLG), 79–99 (LLGL…SILE), 116–136 (PYLT…LTST), 147–167 (WQKL…HYLW), and 169–189 (VKTL…LLLL).

It belongs to the MsrQ family. In terms of assembly, heterodimer of a catalytic subunit (MsrP) and a heme-binding subunit (MsrQ). The cofactor is FMN. Requires heme b as cofactor.

The protein resides in the cell inner membrane. Its function is as follows. Part of the MsrPQ system that repairs oxidized periplasmic proteins containing methionine sulfoxide residues (Met-O), using respiratory chain electrons. Thus protects these proteins from oxidative-stress damage caused by reactive species of oxygen and chlorine generated by the host defense mechanisms. MsrPQ is essential for the maintenance of envelope integrity under bleach stress, rescuing a wide series of structurally unrelated periplasmic proteins from methionine oxidation. MsrQ provides electrons for reduction to the reductase catalytic subunit MsrP, using the quinone pool of the respiratory chain. This Yersinia pestis bv. Antiqua (strain Antiqua) protein is Protein-methionine-sulfoxide reductase heme-binding subunit MsrQ.